Reading from the N-terminus, the 291-residue chain is Protease HtpX homolog (291 aa).

The next 2 helical transmembrane spans lie at 4 to 24 and 38 to 58; these read VFLF…SARL and LGML…ISLL. Histidine 144 contributes to the Zn(2+) binding site. Residue glutamate 145 is part of the active site. Zn(2+) is bound at residue histidine 148. The next 2 helical transmembrane spans lie at 159–179 and 199–219; these read LIQG…AYAL and ISSI…VMYF. Glutamate 224 is a Zn(2+) binding site.

This sequence belongs to the peptidase M48B family. Requires Zn(2+) as cofactor.

It localises to the cell inner membrane. The sequence is that of Protease HtpX homolog from Chlorobium luteolum (strain DSM 273 / BCRC 81028 / 2530) (Pelodictyon luteolum).